The sequence spans 889 residues: Coatomer subunit gamma-2 (889 aa).

HEAT repeat units lie at residues 67 to 102, 103 to 140, 289 to 326, 328 to 360, and 361 to 398; these read VEAT…SPSA, DEVI…STLL, RELT…THPL, VTNC…TGNE, and SSVD…KFPL. The interval 596-617 is disordered; it reads PLAEKKTTGKKPTGPASALSGP.

Belongs to the COPG family. As to quaternary structure, oligomeric complex that consists of at least the alpha, beta, beta', gamma, delta, epsilon and zeta subunits.

The protein resides in the cytoplasm. It is found in the golgi apparatus membrane. The protein localises to the cytoplasmic vesicle. It localises to the COPI-coated vesicle membrane. Functionally, the coatomer is a cytosolic protein complex that binds to dilysine motifs and reversibly associates with Golgi non-clathrin-coated vesicles, which further mediate biosynthetic protein transport from the ER, via the Golgi up to the trans Golgi network. Coatomer complex is required for budding from Golgi membranes, and is essential for the retrograde Golgi-to-ER transport of dilysine-tagged proteins. This is Coatomer subunit gamma-2 from Oryza sativa subsp. japonica (Rice).